The sequence spans 90 residues: UPF0335 protein RPB_1426 (90 aa).

It belongs to the UPF0335 family.

This is UPF0335 protein RPB_1426 from Rhodopseudomonas palustris (strain HaA2).